Reading from the N-terminus, the 286-residue chain is Nucleotide-binding protein HCH_05324 (286 aa).

8-15 (GRSGSGKS) contributes to the ATP binding site. 60–63 (DARN) serves as a coordination point for GTP.

The protein belongs to the RapZ-like family.

In terms of biological role, displays ATPase and GTPase activities. The protein is Nucleotide-binding protein HCH_05324 of Hahella chejuensis (strain KCTC 2396).